The chain runs to 165 residues: Growth arrest and DNA damage-inducible protein GADD45 alpha (165 aa).

T2 bears the Phosphothreonine mark.

Belongs to the GADD45 family. Interacts with AURKA, PCNA, GADD45GIP1 and MAPK14.

It is found in the nucleus. Functionally, might affect PCNA interaction with some CDK (cell division protein kinase) complexes; stimulates DNA excision repair in vitro and inhibits entry of cells into S phase. In T-cells, functions as a regulator of p38 MAPKs by inhibiting p88 phosphorylation and activity. The chain is Growth arrest and DNA damage-inducible protein GADD45 alpha (GADD45A) from Felis catus (Cat).